Reading from the N-terminus, the 109-residue chain is uncharacterized protein (109 aa).

A coiled-coil region spans residues 27-89; the sequence is KEEAHQFRDK…LKRIDELIAV (63 aa).

This is an uncharacterized protein from Streptococcus pneumoniae.